Here is a 93-residue protein sequence, read N- to C-terminus: Putative regulatory protein Fnod_1678 (93 aa).

This sequence belongs to the RemA family.

The polypeptide is Putative regulatory protein Fnod_1678 (Fervidobacterium nodosum (strain ATCC 35602 / DSM 5306 / Rt17-B1)).